A 367-amino-acid chain; its full sequence is Aminomethyltransferase (367 aa).

This sequence belongs to the GcvT family. The glycine cleavage system is composed of four proteins: P, T, L and H.

The catalysed reaction is N(6)-[(R)-S(8)-aminomethyldihydrolipoyl]-L-lysyl-[protein] + (6S)-5,6,7,8-tetrahydrofolate = N(6)-[(R)-dihydrolipoyl]-L-lysyl-[protein] + (6R)-5,10-methylene-5,6,7,8-tetrahydrofolate + NH4(+). In terms of biological role, the glycine cleavage system catalyzes the degradation of glycine. In Mycolicibacterium paratuberculosis (strain ATCC BAA-968 / K-10) (Mycobacterium paratuberculosis), this protein is Aminomethyltransferase.